Consider the following 1135-residue polypeptide: APC membrane recruitment protein 1 (1135 aa).

M1 is subject to N-acetylmethionine. Disordered stretches follow at residues 1–115 (METQ…EGTG), 156–308 (AEKF…VGDP), 339–405 (SMTD…EDDD), 447–484 (GLAP…DDSG), 736–764 (NFGG…KEGN), 921–948 (LQAQ…PLSL), and 1007–1135 (VPES…NLAK). A compositionally biased stretch (low complexity) spans 10 to 19 (QAKGAAASGS). Residues 23 to 35 (QTAEKGAKNKAAE) show a composition bias toward basic and acidic residues. Residues 36–50 (ATEGPTSEPSSSGPG) show a composition bias toward low complexity. Over residues 73–83 (FGGGRSKGSGK) the composition is skewed to gly residues. Basic and acidic residues-rich tracts occupy residues 94–107 (KTHD…HGPE) and 196–208 (GPER…HEHV). Residues 238 to 248 (KVSPTPEPSPP) show a composition bias toward pro residues. A Phosphoserine modification is found at S246. Composition is skewed to basic and acidic residues over residues 253–262 (MACKDPEKPM) and 282–291 (EEPHSPETGE). The segment covering 373 to 405 (ALPDDDDEEEEEEEEVELEEEEEEVKEEEEDDD) has biased composition (acidic residues). The segment covering 455 to 466 (TPQSDQQESAPN) has biased composition (polar residues). The span at 926–938 (EDSDEEDEEEEEG) shows a compositional bias: acidic residues. The segment covering 1058-1069 (PSCSSSSGGFSP) has biased composition (low complexity). Residues 1119-1135 (SLATSYSSTAMNGNLAK) are compositionally biased toward polar residues.

The protein belongs to the Amer family. In terms of assembly, interacts with CTNNB1, AXIN1, LRP6, KEAP1, APC and BTRC. Interacts with SCF (SKP1-CUL1-F-box protein) E3 ubiquitin-protein ligase complexes containing BTRC and/or FBXW11. Identified in the beta-catenin destruction complex containing CTNNB1, APC, AXIN1 and AXIN2. Interacts with WT1. Detected in fetal and adult kidney, brain and spleen.

Its subcellular location is the cytoplasm. The protein resides in the cell membrane. The protein localises to the nucleus. Regulator of the canonical Wnt signaling pathway. Acts by specifically binding phosphatidylinositol 4,5-bisphosphate (PtdIns(4,5)P2), translocating to the cell membrane and interacting with key regulators of the canonical Wnt signaling pathway, such as components of the beta-catenin destruction complex. Acts both as a positive and negative regulator of the Wnt signaling pathway, depending on the context: acts as a positive regulator by promoting LRP6 phosphorylation. Also acts as a negative regulator by acting as a scaffold protein for the beta-catenin destruction complex and promoting stabilization of Axin at the cell membrane. Promotes CTNNB1 ubiquitination and degradation. Involved in kidney development. This is APC membrane recruitment protein 1 (AMER1) from Homo sapiens (Human).